We begin with the raw amino-acid sequence, 452 residues long: 2-succinylbenzoate--CoA ligase (452 aa).

The protein belongs to the ATP-dependent AMP-binding enzyme family. MenE subfamily.

The enzyme catalyses 2-succinylbenzoate + ATP + CoA = 2-succinylbenzoyl-CoA + AMP + diphosphate. It participates in quinol/quinone metabolism; 1,4-dihydroxy-2-naphthoate biosynthesis; 1,4-dihydroxy-2-naphthoate from chorismate: step 5/7. The protein operates within quinol/quinone metabolism; menaquinone biosynthesis. In terms of biological role, converts 2-succinylbenzoate (OSB) to 2-succinylbenzoyl-CoA (OSB-CoA). The polypeptide is 2-succinylbenzoate--CoA ligase (Haemophilus influenzae (strain ATCC 51907 / DSM 11121 / KW20 / Rd)).